Reading from the N-terminus, the 160-residue chain is Conopressin/conophysin, isoform 2 (160 aa).

The signal sequence occupies residues 1 to 30 (MKCSVLQMSRLSWAMCLMLLMLLLLGTAQG). Cys-31 and Cys-36 form a disulfide bridge. A Glycine amide modification is found at Gly-39. A propeptide spanning residues 40–47 (GKRAVDAL) is cleaved from the precursor. 7 disulfides stabilise this stretch: Cys-53-Cys-97, Cys-56-Cys-70, Cys-64-Cys-87, Cys-71-Cys-77, Cys-104-Cys-118, Cys-112-Cys-130, and Cys-119-Cys-124.

Belongs to the vasopressin/oxytocin family. In terms of tissue distribution, expressed by the venom gland.

The protein resides in the secreted. Targets vasopressin-oxytocin related receptors. This Conus monile (Necklace cone) protein is Conopressin/conophysin, isoform 2.